Here is a 944-residue protein sequence, read N- to C-terminus: E3 ubiquitin-protein ligase JMJ24 (944 aa).

Disordered stretches follow at residues 20–40 (QTRSANGIGNGNGESIPGIPD) and 77–103 (ANSAFRANQKKAKRRSSLGETDTYSEG). The region spanning 38–83 (IPDDLRCKRSDGKQWRCTAMSMADKTVCEKHYIQAKKRAANSAFRA) is the WRC domain. Residues 73 to 80 (KKRAANSA) carry the Nuclear localization signal 1 motif. The PHD-type; atypical zinc finger occupies 217-269 (GEICHQCQRKDRERIISCLKCNQRAFCHNCLSARYSEISLEEVEKVCPACRGL). Positions 220, 223, 234, 237, 243, 246, 263, and 266 each coordinate Zn(2+). A Nuclear localization signal 2 motif is present at residues 323–330 (EKRLREVE). Positions 621–873 (PRLGLLNVAA…ESARLAEEIR (253 aa)) constitute a JmjC domain. Residues 685-703 (ERVRKTKPVPEEPDQKMSE) show a composition bias toward basic and acidic residues. The interval 685-715 (ERVRKTKPVPEEPDQKMSENESLLSPEQKLR) is disordered.

This sequence belongs to the JARID1 histone demethylase family. Homodimer. Interacts with RDR2. Binds to CMT3. Associates with the E2 ubiquitin-conjugating enzyme UBC10. In terms of processing, self-ubiquitinates. In terms of tissue distribution, expressed in inflorescences, flowers, roots, siliques, leaves and stems, especially in the vasculature (mainly phloem), with highest levels in floral organs.

The protein localises to the nucleus. It catalyses the reaction S-ubiquitinyl-[E2 ubiquitin-conjugating enzyme]-L-cysteine + [acceptor protein]-L-lysine = [E2 ubiquitin-conjugating enzyme]-L-cysteine + N(6)-ubiquitinyl-[acceptor protein]-L-lysine.. Its function is as follows. Binds histone H3 but seems to have lost demethylase activity probably due to its inability to bind iron Fe(2+). Possesses E3 ubiquitin ligase activity and targets directly CMT3 for proteasomal degradation to initiate destabilization of the heterochromatic state (e.g. CHG cytosine methylation and H3K9me2) of endogenous silenced loci. Required for the removal of repressive H3K9me2 histone marks to facilitate the transcription of AtSN1, AtMu1c, solo LTR and SDC, thus counteracting their transcriptional silencing. Mainly required to promote the basal level transcription of silenced loci such as TE and repeats targeted by RNA-dependent DNA methylation (RdDM) for silencing, a specialized branch of the RNA interference (RNAi) pathway. Also cooperates with RNAi pathways for gene silencing both by contributing to the production of 24-nt siRNA to initiate RdDM and by recruiting RDR2 to enable local transcripts to make dsRNA. Antagonizes histone H3K9 demethylase IBM1/JMJ25 function. This chain is E3 ubiquitin-protein ligase JMJ24, found in Arabidopsis thaliana (Mouse-ear cress).